We begin with the raw amino-acid sequence, 77 residues long: MNQEIFEKVKKIVVEQLEVDPDKVTPDATFAEDLGADSLDTVELVMALEEEFDIEIPDEVAETIDTVGKAVEHIESK.

The 75-residue stretch at 3–77 (QEIFEKVKKI…GKAVEHIESK (75 aa)) folds into the Carrier domain. At serine 38 the chain carries O-(pantetheine 4'-phosphoryl)serine.

Belongs to the acyl carrier protein (ACP) family. Post-translationally, 4'-phosphopantetheine is transferred from CoA to a specific serine of apo-ACP by AcpS. This modification is essential for activity because fatty acids are bound in thioester linkage to the sulfhydryl of the prosthetic group.

The protein localises to the cytoplasm. Its pathway is lipid metabolism; fatty acid biosynthesis. In terms of biological role, carrier of the growing fatty acid chain in fatty acid biosynthesis. The polypeptide is Acyl carrier protein (Synechocystis sp. (strain ATCC 27184 / PCC 6803 / Kazusa)).